The following is a 233-amino-acid chain: Large ribosomal subunit protein uL1 (233 aa).

This sequence belongs to the universal ribosomal protein uL1 family. Part of the 50S ribosomal subunit.

In terms of biological role, binds directly to 23S rRNA. The L1 stalk is quite mobile in the ribosome, and is involved in E site tRNA release. Its function is as follows. Protein L1 is also a translational repressor protein, it controls the translation of the L11 operon by binding to its mRNA. In Polynucleobacter asymbioticus (strain DSM 18221 / CIP 109841 / QLW-P1DMWA-1) (Polynucleobacter necessarius subsp. asymbioticus), this protein is Large ribosomal subunit protein uL1.